We begin with the raw amino-acid sequence, 112 residues long: Small ribosomal subunit protein bS6 (112 aa).

Belongs to the bacterial ribosomal protein bS6 family.

Binds together with bS18 to 16S ribosomal RNA. This is Small ribosomal subunit protein bS6 from Azobacteroides pseudotrichonymphae genomovar. CFP2.